The following is a 521-amino-acid chain: tRNA (adenine(58)-N(1))-methyltransferase non-catalytic subunit trm6 (521 aa).

Disordered regions lie at residues 1–24 (METETPMDVETKSTTSNTNDNNNN), 305–336 (IYDKQVKEKEKEKEKDENVKDEKESGEEAKTI), and 452–521 (QKST…KIDE). Low complexity predominate over residues 12–24 (KSTTSNTNDNNNN). The span at 308 to 334 (KQVKEKEKEKEKDENVKDEKESGEEAK) shows a compositional bias: basic and acidic residues. Composition is skewed to low complexity over residues 452–476 (QKSTTTTTTTTTTTTNNSINPTKTT) and 487–502 (DATTSSSSSSTAAATT). The span at 510 to 521 (SESALKKRKIDE) shows a compositional bias: basic and acidic residues.

The protein belongs to the TRM6/GCD10 family. As to quaternary structure, heterotetramer; composed of two copies of trmt6 and two copies of trmt61a.

Its subcellular location is the nucleus. Substrate-binding subunit of tRNA (adenine-N(1)-)-methyltransferase, which catalyzes the formation of N(1)-methyladenine at position 58 (m1A58) in initiator methionyl-tRNA. In Dictyostelium discoideum (Social amoeba), this protein is tRNA (adenine(58)-N(1))-methyltransferase non-catalytic subunit trm6 (trmt6).